A 228-amino-acid chain; its full sequence is UPF0173 metal-dependent hydrolase Smar_0891 (228 aa).

It belongs to the UPF0173 family.

This Staphylothermus marinus (strain ATCC 43588 / DSM 3639 / JCM 9404 / F1) protein is UPF0173 metal-dependent hydrolase Smar_0891.